We begin with the raw amino-acid sequence, 490 residues long: Cis-aconitate decarboxylase (490 aa).

It belongs to the PrpD family.

It localises to the mitochondrion. The enzyme catalyses cis-aconitate + H(+) = itaconate + CO2. Involved in the production of itaconic acid, a soluble unsaturated dicarboxylic acid mainly produced from sugars. This Aspergillus terreus protein is Cis-aconitate decarboxylase (cad1).